The chain runs to 144 residues: AP-4 complex subunit sigma-1 (144 aa).

Belongs to the adaptor complexes small subunit family. Adaptor protein complex 4 (AP-4) is a heterotetramer composed of two large adaptins (epsilon-type subunit AP4E1 and beta-type subunit AP4B1), a medium adaptin (mu-type subunit AP4M1) and a small adaptin (sigma-type AP4S1).

The protein localises to the golgi apparatus. Its subcellular location is the trans-Golgi network membrane. Its function is as follows. Component of the adaptor protein complex 4 (AP-4). Adaptor protein complexes are vesicle coat components involved both in vesicle formation and cargo selection. They control the vesicular transport of proteins in different trafficking pathways. AP-4 forms a non clathrin-associated coat on vesicles departing the trans-Golgi network (TGN) and may be involved in the targeting of proteins from the trans-Golgi network (TGN) to the endosomal-lysosomal system. It is also involved in protein sorting to the basolateral membrane in epithelial cells and the proper asymmetric localization of somatodendritic proteins in neurons. AP-4 is involved in the recognition and binding of tyrosine-based sorting signals found in the cytoplasmic part of cargos, but may also recognize other types of sorting signal. The chain is AP-4 complex subunit sigma-1 from Mus musculus (Mouse).